The following is a 538-amino-acid chain: MAVVSKKIPAPDKVQVKTALLSVFDKTGIVELARALSEKGVRLLSTGGTHKAIAAAGLAVTDVSEVTAFPEIMDGRVKTLHPKVHGGLLAIRDDAEHQAAMKEHGIEGIDLAVINLYPFEDVRKAGGDYPTTVENIDIGGPAMIRASAKNHAYVTTLTDPADYSELLEQLSADAGQTTYDFRKRMAAKAFARTAAYDAMIANWFAEALDIATPRHRVIGGVLREEMRYGENPHQKAAFYVTGENRPGVSTATLLQGKQLSYNNINDTDAAYELVAEFLPENGPACAIIKHANPCGVATGPSLVEAYKRALACDSVSAFGGIIALNSILDAATAEEIVKLFTEVIIAPEVTEEAKAIIARKPNLRLLSVGALPDPRVAGLTAKTVSGGLLVQNRDNALVEDMELKVVTKRAPTAQELEDMKFAFRVAKHVKSNAVVYAKDGQTAGIGAGQMSRVDSARIAAIKAEEAAKAMGLAEPLTRGSAVASEAFLPFADGLLSAIAAGATAVIQPGGSMRDQEVIDAANEHNVAMVFTGIRHFRH.

Residues 8-158 form the MGS-like domain; it reads IPAPDKVQVK…KNHAYVTTLT (151 aa).

This sequence belongs to the PurH family.

The catalysed reaction is (6R)-10-formyltetrahydrofolate + 5-amino-1-(5-phospho-beta-D-ribosyl)imidazole-4-carboxamide = 5-formamido-1-(5-phospho-D-ribosyl)imidazole-4-carboxamide + (6S)-5,6,7,8-tetrahydrofolate. It catalyses the reaction IMP + H2O = 5-formamido-1-(5-phospho-D-ribosyl)imidazole-4-carboxamide. It functions in the pathway purine metabolism; IMP biosynthesis via de novo pathway; 5-formamido-1-(5-phospho-D-ribosyl)imidazole-4-carboxamide from 5-amino-1-(5-phospho-D-ribosyl)imidazole-4-carboxamide (10-formyl THF route): step 1/1. Its pathway is purine metabolism; IMP biosynthesis via de novo pathway; IMP from 5-formamido-1-(5-phospho-D-ribosyl)imidazole-4-carboxamide: step 1/1. This chain is Bifunctional purine biosynthesis protein PurH, found in Rhizobium rhizogenes (strain K84 / ATCC BAA-868) (Agrobacterium radiobacter).